The primary structure comprises 1160 residues: MEESGVIEVTVKTLDSQSRTFTVRGEWTVKQFKEHIAASVEISVDKQRLIYQGKVLQDERTLTEYNVDGKVIHLVERPPPQSSQPGGGGGGVSGSSGAADGGSSSSQSSAYTTSHDRNANNYVMLGTFNLPVNIMDPQQIQMSVQQMLAGVGEMGRNVRVSTSTGSSGSVDVHINVDQSVQSEPRMRLHLAENLLRETQALIHRLEGQSSEPSQQETPPPQPSSSSFSAHPMDSSPPPPSVSSSASQTEGETQSGPNHPSPLELVEVLSEVRRVEERLRPFMERTHSILGAATSADYNNNTQEREEDQRTLNLIGESLHLLGNTLVALSDLRCNLSAQPPRHLHVVRPMSHYTSPVMMQSGLPHIPIPMNLGSTVTMTSNSRQTSDGQPQPPHSSNQSDQQGQAPPTPANESNQQTGHGQGTPRVIRITHQTMEPVVMMQMNLDGTTVPLHVPGLPPEFMQAIMHQISQQAVTMATAASAGHQGQQQGTAGAGAQNGESPVPPPPQARVVITRPTLSPRVPQPMGTRGTTINLRAAVPPPSGQQTNQMVSGLVGQLLLPLHTGDQTSTTSSSHSFSFSTSSSTSSSSSFSSASPPLSSANTSGQTSTHTTSTASVGQAQESGPGDNLAQLLGSLLGGAAGAGGGVSGATPSITVTVPGVPAFIQGLSEFIQSGQPVFPSPNQQPPPSQATPPSAPSGPAPTTAPSGGAETLSPELFTGIVQGVLSTMMGSLGAGQGNTESIAQFIQRLSQTSNLFTPGAGDAVGFFGDLLSLVCQSFSMVDMVLLLHGNPQPLSRIQPQLTAFFTEHYLQGREPTDANIASASEDLINELEEYIAESFSTVTVREGVDIIQTNMSFLRQQFTRMATHILRCTDNTFGQRLLYLCTQGLFECLALNLYCLRGEQRALTTVINHRIRRMSAEVNPSLVNWLTSMMSMRLHVILEHNPVTEDQIQHYVIYTQSESARRTEAGSQSSQQSQNMNVEEGLSPAPATTAEEALRSTGDTDGDEAPGRPSAEETRGAVAMATTEREESTGEAEPWAATVPPEWVPIIRRDMLTQRKMKAQPPLSDAYMHGMPAKRRKTAQGEGPHLSLTEAVSRAARTAGVRPVTAPDSLQGELETPELQEAYAQQVKSDIKKRLSDDPDYNHQRFPNTHRVFSEDA.

Residues I7–S82 enclose the Ubiquitin-like domain. Disordered stretches follow at residues E76 to S114, E206 to P261, I367 to T422, A478 to Q547, G563 to A628, S672 to L711, S962 to W1038, and Y1126 to A1160. A compositionally biased stretch (gly residues) spans P85 to G94. Low complexity-rich tracts occupy residues S95 to A110 and S223 to D233. Composition is skewed to polar residues over residues Q247 to N257 and L371 to G417. Low complexity-rich tracts occupy residues A478 to Q495 and T566 to S614. The span at F677–P698 shows a compositional bias: pro residues. Positions A699–A708 are enriched in low complexity. Residues S1132–H1146 are compositionally biased toward basic and acidic residues.

As to quaternary structure, component of the bag6/bat3 complex.

The protein localises to the cytoplasm. It is found in the cytosol. The protein resides in the nucleus. It localises to the secreted. Its subcellular location is the extracellular exosome. In terms of biological role, ATP-independent molecular chaperone preventing the aggregation of misfolded and hydrophobic patches-containing proteins. Functions as part of a cytosolic protein quality control complex, the bag6/bat3 complex, which maintains these client proteins in a soluble state and participates in their proper delivery to the endoplasmic reticulum or alternatively can promote their sorting to the proteasome where they undergo degradation. The bag6/bat3 complex is involved in the post-translational delivery of tail-anchored/type II transmembrane proteins to the endoplasmic reticulum membrane. Similarly, the bag6/bat3 complex also functions as a sorting platform for proteins of the secretory pathway that are mislocalized to the cytosol either delivering them to the proteasome for degradation or to the endoplasmic reticulum. The bag6/bat3 complex also plays a role in the endoplasmic reticulum-associated degradation (ERAD), a quality control mechanism that eliminates unwanted proteins of the endoplasmic reticulum through their retrotranslocation to the cytosol and their targeting to the proteasome. It maintains these retrotranslocated proteins in an unfolded yet soluble state condition in the cytosol to ensure their proper delivery to the proteasome. Also required for selective ubiquitin-mediated degradation of defective nascent chain polypeptides by the proteasome. Also involved in endoplasmic reticulum stress-induced pre-emptive quality control, a mechanism that selectively attenuates the translocation of newly synthesized proteins into the endoplasmic reticulum and reroutes them to the cytosol for proteasomal degradation. May ensure the proper degradation of these proteins and thereby protects the endoplasmic reticulum from protein overload upon stress. By stabilizing a large spectrum of proteins, may indirectly affect different biological processes including apoptosis. By controlling the steady-state expression of the IGF1R receptor, indirectly regulates the insulin-like growth factor receptor signaling pathway. Its function is as follows. When nuclear, may also act as a component of some chromatin regulator complex. The sequence is that of Large proline-rich protein BAG6 from Danio rerio (Zebrafish).